The following is a 503-amino-acid chain: Ell-associated factor Eaf (503 aa).

Polar residues-rich tracts occupy residues 119–145 (TRNE…NQGA) and 167–186 (ENST…SRRN). Disordered stretches follow at residues 119-220 (TRNE…PAWD), 250-360 (GHAN…SQSV), and 372-503 (GGVL…DDDD). Ser196 carries the post-translational modification Phosphoserine. Low complexity predominate over residues 202–215 (SPSRPVPVHRSPQS). 2 stretches are compositionally biased toward polar residues: residues 250–273 (GHAN…STHI) and 298–307 (MAQQQQQHPS). The segment covering 308-337 (NYGRGYNGGHNHAQQQQQQQRNSPPRQRPS) has biased composition (low complexity). Over residues 385–400 (DSSDSDSGSDSDDSTE) the composition is skewed to acidic residues. Low complexity-rich tracts occupy residues 406 to 437 (QGQQ…HHNQ), 454 to 472 (HQQQ…QKQQ), and 487 to 497 (LQNDLQLSSNS).

The protein belongs to the EAF family.

The protein localises to the nucleus. Its function is as follows. Promotes transcriptional elongation by Su(Tpl)/ELL. Essential for development. In Drosophila sechellia (Fruit fly), this protein is Ell-associated factor Eaf.